An 874-amino-acid chain; its full sequence is Bifunctional uridylyltransferase/uridylyl-removing enzyme (874 aa).

The interval 1-332 is uridylyltransferase; sequence MPLQSPLTFS…NGGATENAEI (332 aa). Residues 333 to 692 form a uridylyl-removing region; the sequence is LDADFQRRGS…ISKKATRGGT (360 aa). The HD domain occupies 451–573; that stretch reads VDEHSIRLLK…VRDEESLEYL (123 aa). 2 ACT domains span residues 693-777 and 800-874; these read EVFV…RTPN and LMEF…AVTA.

The protein belongs to the GlnD family. The cofactor is Mg(2+).

It catalyses the reaction [protein-PII]-L-tyrosine + UTP = [protein-PII]-uridylyl-L-tyrosine + diphosphate. It carries out the reaction [protein-PII]-uridylyl-L-tyrosine + H2O = [protein-PII]-L-tyrosine + UMP + H(+). With respect to regulation, uridylyltransferase (UTase) activity is inhibited by glutamine, while glutamine activates uridylyl-removing (UR) activity. Its function is as follows. Modifies, by uridylylation and deuridylylation, the PII regulatory proteins (GlnB and homologs), in response to the nitrogen status of the cell that GlnD senses through the glutamine level. Under low glutamine levels, catalyzes the conversion of the PII proteins and UTP to PII-UMP and PPi, while under higher glutamine levels, GlnD hydrolyzes PII-UMP to PII and UMP (deuridylylation). Thus, controls uridylylation state and activity of the PII proteins, and plays an important role in the regulation of nitrogen assimilation and metabolism. This chain is Bifunctional uridylyltransferase/uridylyl-removing enzyme, found in Vibrio parahaemolyticus serotype O3:K6 (strain RIMD 2210633).